A 463-amino-acid polypeptide reads, in one-letter code: Cysteine--tRNA ligase (463 aa).

Residue C28 participates in Zn(2+) binding. The 'HIGH' region motif lies at 30–40 (ITPYDLCHIGH). 3 residues coordinate Zn(2+): C211, H236, and E240. The 'KMSKS' region signature appears at 268-272 (KMSKS). K271 lines the ATP pocket.

It belongs to the class-I aminoacyl-tRNA synthetase family. Monomer. The cofactor is Zn(2+).

Its subcellular location is the cytoplasm. The enzyme catalyses tRNA(Cys) + L-cysteine + ATP = L-cysteinyl-tRNA(Cys) + AMP + diphosphate. This is Cysteine--tRNA ligase from Wigglesworthia glossinidia brevipalpis.